Consider the following 272-residue polypeptide: NH(3)-dependent NAD(+) synthetase (272 aa).

45–52 (GISGGQDS) is an ATP binding site. Mg(2+) is bound at residue Asp-51. Residue Arg-138 coordinates deamido-NAD(+). Thr-158 serves as a coordination point for ATP. Residue Glu-163 participates in Mg(2+) binding. Lys-171 and Asp-178 together coordinate deamido-NAD(+). ATP is bound by residues Lys-187 and Thr-209. 258 to 259 (HK) contributes to the deamido-NAD(+) binding site.

Belongs to the NAD synthetase family. As to quaternary structure, homodimer.

The catalysed reaction is deamido-NAD(+) + NH4(+) + ATP = AMP + diphosphate + NAD(+) + H(+). Its pathway is cofactor biosynthesis; NAD(+) biosynthesis; NAD(+) from deamido-NAD(+) (ammonia route): step 1/1. Its function is as follows. Catalyzes the ATP-dependent amidation of deamido-NAD to form NAD. Uses ammonia as a nitrogen source. The polypeptide is NH(3)-dependent NAD(+) synthetase (Bacillus licheniformis (strain ATCC 14580 / DSM 13 / JCM 2505 / CCUG 7422 / NBRC 12200 / NCIMB 9375 / NCTC 10341 / NRRL NRS-1264 / Gibson 46)).